We begin with the raw amino-acid sequence, 355 residues long: Vacuolar protein sorting-associated protein 37C (355 aa).

Ser29 is subject to Phosphoserine. The VPS37 C-terminal domain occupies 78–167 (VERCQEQKAK…RKPRASQELA (90 aa)). Residues 159–355 (KPRASQELAG…PPPGPAWPGY (197 aa)) form a disordered region. Composition is skewed to pro residues over residues 170–186 (APPP…PQGT) and 194–205 (PQPPSAMPPYPL). Positions 246-257 (PAAQPGPRGAAG) are enriched in low complexity. Pro residues predominate over residues 321–355 (PGQPQPSVPLQPPYPPGPAPPYGFPPPPGPAWPGY).

It belongs to the VPS37 family. As to quaternary structure, component of the ESCRT-I complex (endosomal sorting complex required for transport I) which consists of TSG101, VPS28, a VPS37 protein (VPS37A to -D) and MVB12A or MVB12B in a 1:1:1:1 stoichiometry. Interacts with TSG101, VPS28, MVB12A and MVB12B. Component of the ESCRT-I complex (endosomal sorting complex required for transport I) which consists of TSG101, VPS28, a VPS37 protein (VPS37A to -D) and UBAP1 in a 1:1:1:1 stoichiometry. Interacts with HGS and STAM2. Interacts with CEP55. Post-translationally, phosphorylated by TBK1.

The protein resides in the late endosome membrane. Component of the ESCRT-I complex, a regulator of vesicular trafficking process. Required for the sorting of endocytic ubiquitinated cargos into multivesicular bodies. May be involved in cell growth and differentiation. The polypeptide is Vacuolar protein sorting-associated protein 37C (VPS37C) (Pongo abelii (Sumatran orangutan)).